A 318-amino-acid polypeptide reads, in one-letter code: Mechanosensory protein 3 (318 aa).

LIM zinc-binding domains are found at residues 27-86 (NKCY…DYSA) and 87-152 (HRCA…PMDD). Positions 214-273 (RRGPRTTIRQNQLDVLNEMFSNTPKPSKHARAKLALETGLSMRVIQVWFQNRRSKERRLK) form a DNA-binding region, homeobox.

It localises to the nucleus. Its function is as follows. Specifies differentiation of the set of six touch receptor neurons. Binds cooperatively as a heterodimer with unc-86 to sites in the mec-3 gene promoter. The polypeptide is Mechanosensory protein 3 (mec-3) (Caenorhabditis briggsae).